The chain runs to 484 residues: L-amino-acid oxidase (484 aa).

Cys-8 and Cys-171 form a disulfide bridge. Residues Met-41–Ser-42, Glu-61–Ala-62, and Arg-69 contribute to the FAD site. His-73 contacts Zn(2+). Residue Gly-85–Arg-88 coordinates FAD. Residue Arg-88 participates in substrate binding. Asn-170 is a glycosylation site (N-linked (GlcNAc...) asparagine). His-221 contributes to the substrate binding site. Val-259 serves as a coordination point for FAD. Glu-277 is a Zn(2+) binding site. An intrachain disulfide couples Cys-329 to Cys-410. Tyr-370 contributes to the substrate binding site. FAD-binding positions include Glu-455 and Gly-462–Thr-467. Gly-462–Trp-463 serves as a coordination point for substrate.

This sequence belongs to the flavin monoamine oxidase family. FIG1 subfamily. As to quaternary structure, homodimer; non-covalently linked. Requires FAD as cofactor. Expressed by the venom gland.

The protein resides in the secreted. It catalyses the reaction an L-alpha-amino acid + O2 + H2O = a 2-oxocarboxylate + H2O2 + NH4(+). Catalyzes an oxidative deamination of predominantly hydrophobic and aromatic L-amino acids, thus producing hydrogen peroxide that may contribute to the diverse toxic effects of this enzyme. Exhibits diverse biological activities, such as hemorrhage, hemolysis, edema, apoptosis of vascular endothelial cells or tumor cell lines, antibacterial and antiparasitic activities, as well as regulation of platelet aggregation. Effects of snake L-amino oxidases on platelets are controversial, since they either induce aggregation or inhibit agonist-induced aggregation. These different effects are probably due to different experimental conditions. In Vipera ammodytes ammodytes (Western sand viper), this protein is L-amino-acid oxidase.